Here is a 331-residue protein sequence, read N- to C-terminus: MELEFLYDLLQLPKEVAQPTEEELPRGGKKKYLSPNSKRNPKFEELQKVLMEWINTTLLPEHIVVRSLEEDMFDGLILHHLFQKLASLKLEVEEISLTSASQRHKLGVILEAVNQNLQVEEKQAKWSVETIFNKDLLATLHLLVALAKRFQPDLPLPDNVQVEVIHIESTKTGLKSDKQVEQLTECKSHKDQPLQDAFDELFKLAPEKVHAVQEAIVSFVNQKLERLGLSVQSLDTQFADGVILLLLIGQLEGFFLHLKEFYLTPSSPTEMLHNVTLALDLLKDEGLFSYPVNPEDIVNKDAKSTLRILYSLFQKHSLRAEGGGAHHATPN.

Residue M1 is modified to N-acetylmethionine. The segment at 18–38 (QPTEEELPRGGKKKYLSPNSK) is disordered. Calponin-homology (CH) domains are found at residues 44 to 151 (EELQ…KRFQ) and 210 to 317 (HAVQ…QKHS).

It belongs to the parvin family. In terms of assembly, interacts with ILK; the interaction promotes the establishment of cell polarity required for leukocyte migration. Interacts with ARHGEF6; the guanine nucleotide exchange factor activity of ARHGEF6 is essential for the PARVG-induced enhancement of cell spreading. Expressed strongly in spleen and testis, moderately in lung and weakly in brain and heart.

It localises to the cell junction. It is found in the focal adhesion. The protein resides in the cell membrane. The protein localises to the cytoplasm. Its subcellular location is the cytoskeleton. Functionally, plays a role with ILK in promoting the cell adhesion and spreading of leukocytes. The sequence is that of Gamma-parvin (Parvg) from Mus musculus (Mouse).